Here is a 68-residue protein sequence, read N- to C-terminus: Small cysteine-rich protein 2 (68 aa).

A signal peptide spans 1–24; sequence MAVKFHLCLLLIILVGMGAHVAFA.

It belongs to the Cnidaria small cysteine-rich protein (SCRiP) family. gamma subfamily. Post-translationally, contains 4 disulfide bonds.

It localises to the secreted. Its subcellular location is the nematocyst. Its function is as follows. Induces neurotoxic symptoms on zebrafish. Has also been claimed to be implied in calcification, but tests on homolog proteins suggest that proteins of this family have a neurotoxic function and not a calcification function. This Orbicella faveolata (Mountainous star coral) protein is Small cysteine-rich protein 2.